Reading from the N-terminus, the 187-residue chain is MRGKTAEDLKLLDLLDPVAEAVGYEIVRLRLMGGERNQRRLQIMAERPLLEDGTGGDMNVEDCAKLSRAVSEVLDAADPISGEYTLEVSSPGVDRPLTRLKDFDTYEGYEARLELDRLAEGRKRFRGVLAGVEGDQVAIDLEGEEETALVPFAWIVEAKLVLTDELMKRGAQTRAARLESDEQQTSE.

This sequence belongs to the RimP family.

Its subcellular location is the cytoplasm. Its function is as follows. Required for maturation of 30S ribosomal subunits. This chain is Ribosome maturation factor RimP, found in Phenylobacterium zucineum (strain HLK1).